Here is a 179-residue protein sequence, read N- to C-terminus: 3-hydroxyanthranilate 3,4-dioxygenase (179 aa).

R47 provides a ligand contact to O2. Fe cation-binding residues include H51, E57, and H96. E57 is a binding site for substrate. Positions 100 and 110 each coordinate substrate. Positions 125, 128, 162, and 165 each coordinate Fe cation.

Belongs to the 3-HAO family. The cofactor is Fe(2+).

It catalyses the reaction 3-hydroxyanthranilate + O2 = (2Z,4Z)-2-amino-3-carboxymuconate 6-semialdehyde. Its pathway is cofactor biosynthesis; NAD(+) biosynthesis; quinolinate from L-kynurenine: step 3/3. In terms of biological role, catalyzes the oxidative ring opening of 3-hydroxyanthranilate to 2-amino-3-carboxymuconate semialdehyde, which spontaneously cyclizes to quinolinate. The polypeptide is 3-hydroxyanthranilate 3,4-dioxygenase (Bacillus cereus (strain ATCC 10987 / NRS 248)).